The following is a 199-amino-acid chain: Prolactin-1 (199 aa).

Disulfide bonds link Cys-4–Cys-11, Cys-58–Cys-174, and Cys-191–Cys-199. Residue Asn-60 is glycosylated (N-linked (GlcNAc...) asparagine).

The protein belongs to the somatotropin/prolactin family. In terms of processing, glycosylated.

It is found in the secreted. The chain is Prolactin-1 from Alligator mississippiensis (American alligator).